We begin with the raw amino-acid sequence, 85 residues long: Elongation factor 1-beta (85 aa).

It belongs to the EF-1-beta/EF-1-delta family.

Functionally, promotes the exchange of GDP for GTP in EF-1-alpha/GDP, thus allowing the regeneration of EF-1-alpha/GTP that could then be used to form the ternary complex EF-1-alpha/GTP/AAtRNA. This is Elongation factor 1-beta from Methanosphaerula palustris (strain ATCC BAA-1556 / DSM 19958 / E1-9c).